Here is a 485-residue protein sequence, read N- to C-terminus: Glutamyl-tRNA(Gln) amidotransferase subunit A (485 aa).

Catalysis depends on charge relay system residues lysine 79 and serine 154. The active-site Acyl-ester intermediate is serine 178.

The protein belongs to the amidase family. GatA subfamily. In terms of assembly, heterotrimer of A, B and C subunits.

The catalysed reaction is L-glutamyl-tRNA(Gln) + L-glutamine + ATP + H2O = L-glutaminyl-tRNA(Gln) + L-glutamate + ADP + phosphate + H(+). Its function is as follows. Allows the formation of correctly charged Gln-tRNA(Gln) through the transamidation of misacylated Glu-tRNA(Gln) in organisms which lack glutaminyl-tRNA synthetase. The reaction takes place in the presence of glutamine and ATP through an activated gamma-phospho-Glu-tRNA(Gln). The sequence is that of Glutamyl-tRNA(Gln) amidotransferase subunit A from Geobacillus thermodenitrificans (strain NG80-2).